The primary structure comprises 366 residues: Probable quinol oxidase subunit 2 (366 aa).

Residues Met-1–Gly-19 form the signal peptide. Cys-20 carries the N-palmitoyl cysteine lipid modification. Residue Cys-20 is the site of S-diacylglycerol cysteine attachment. 2 consecutive transmembrane segments (helical) span residues Phe-38–Phe-58 and Ala-80–Pro-100. Residues Glu-330 to His-366 form a disordered region. Residues Glu-335–His-366 are compositionally biased toward basic and acidic residues.

The protein belongs to the cytochrome c oxidase subunit 2 family.

It is found in the cell membrane. It catalyses the reaction 2 a quinol + O2 = 2 a quinone + 2 H2O. Its function is as follows. Catalyzes quinol oxidation with the concomitant reduction of oxygen to water. Subunit II transfers the electrons from a quinol to the binuclear center of the catalytic subunit I. The polypeptide is Probable quinol oxidase subunit 2 (qoxA) (Staphylococcus aureus (strain bovine RF122 / ET3-1)).